Reading from the N-terminus, the 118-residue chain is Large ribosomal subunit protein bL20 (118 aa).

It belongs to the bacterial ribosomal protein bL20 family.

Its function is as follows. Binds directly to 23S ribosomal RNA and is necessary for the in vitro assembly process of the 50S ribosomal subunit. It is not involved in the protein synthesizing functions of that subunit. The protein is Large ribosomal subunit protein bL20 of Pseudomonas fluorescens (strain ATCC BAA-477 / NRRL B-23932 / Pf-5).